A 481-amino-acid chain; its full sequence is 4-O-methyl-glucuronoyl methylesterase (481 aa).

Positions Met-1 to Ala-21 are cleaved as a signal peptide. Residues Gln-23–Ile-59 enclose the CBM1 domain. Intrachain disulfides connect Cys-108/Cys-143, Cys-292/Cys-428, and Cys-324/Cys-400. The short motif at Gly-291–Gly-296 is the GXSYXG catalytic site motif element. Catalysis depends on Ser-293, which acts as the Nucleophile. Lys-297, Gln-339, Glu-347, and Trp-391 together coordinate substrate. His-427 acts as the Proton donor/acceptor in catalysis.

It belongs to the carbohydrate esterase 15 (CE15) family.

Its subcellular location is the secreted. The enzyme catalyses a 4-O-methyl-alpha-D-glucuronosyl ester derivative + H2O = 4-O-methyl-alpha-D-glucuronate derivative + an alcohol + H(+). Functionally, glucuronoyl esterase which may play a significant role in biomass degradation, as it is considered to disconnect hemicellulose from lignin through the hydrolysis of the ester bond between 4-O-methyl-D-glucuronic acid residues of glucuronoxylans and aromatic alcohols of lignin. This chain is 4-O-methyl-glucuronoyl methylesterase, found in Podospora anserina (strain S / ATCC MYA-4624 / DSM 980 / FGSC 10383) (Pleurage anserina).